The chain runs to 587 residues: Phosphatidate phosphatase APP1 (587 aa).

Disordered regions lie at residues 1 to 28 and 150 to 178; these read MNSQGYDESSSSTAATSGPTSGDPRMGK and PPHLEEDSGDLNDSQSSIESSLSSKSENR. Low complexity-rich tracts occupy residues 9 to 22 and 163 to 174; these read SSSSTAATSGPTSG and SQSSIESSLSSK. A DXDXT motif motif is present at residues 281–285; it reads DIDDT. The interval 452–521 is disordered; it reads QQRPMQMTKS…NRQLPNLDAN (70 aa). Residues 467 to 483 are interaction with SH3 domain of ABP1; it reads RRPPPPPIPSTQKPSLT.

In terms of assembly, monomer. Interacts with ABP1. Requires Mg(2+) as cofactor. In terms of processing, N-glycosylated.

It is found in the cytoplasm. Its subcellular location is the cytoskeleton. It localises to the actin patch. The catalysed reaction is a 1,2-diacyl-sn-glycero-3-phosphate + H2O = a 1,2-diacyl-sn-glycerol + phosphate. The enzyme catalyses 1,2-di-(9Z-octadecenoyl)-sn-glycero-3-phosphate + H2O = 1,2-di-(9Z-octadecenoyl)-sn-glycerol + phosphate. With respect to regulation, inhibited by N-ethylmaleimide. In terms of biological role, mg(2+)-dependent phosphatidate (PA) phosphatase which catalyzes the dephosphorylation of PA to yield diacylglycerol. May play a role in vesicular trafficking through its PAP activity at cortical actin patches. Can also utilize diacylglycerol pyrophosphate and lyso-PA as substrates with specificity constants 4- and 7-fold lower, respectively, when compared with PA. This is Phosphatidate phosphatase APP1 (APP1) from Saccharomyces cerevisiae (strain ATCC 204508 / S288c) (Baker's yeast).